The following is a 379-amino-acid chain: Guanine nucleotide-binding protein subunit alpha-12 (379 aa).

Residue cysteine 11 is the site of S-palmitoyl cysteine attachment. The 326-residue stretch at arginine 54–glutamine 379 folds into the G-alpha domain. A G1 motif region spans residues lysine 57–threonine 70. GTP contacts are provided by residues glutamate 65–threonine 70 and leucine 200–arginine 203. A Mg(2+)-binding site is contributed by serine 69. The segment at aspartate 198–threonine 206 is G2 motif. Residue threonine 206 participates in Mg(2+) binding. Threonine 206 bears the Phosphothreonine mark. The segment at phenylalanine 221 to arginine 230 is G3 motif. The segment at isoleucine 290–aspartate 297 is G4 motif. Residues asparagine 294–aspartate 297 and alanine 351 contribute to the GTP site. Residues threonine 349–threonine 354 are G5 motif.

This sequence belongs to the G-alpha family. G(12) subfamily. G proteins are composed of 3 units; alpha, beta and gamma. The alpha chain contains the guanine nucleotide binding site. Interacts with UBXD5. Interacts (in GTP-bound form) with PPP5C (via TPR repeats); activates PPP5C phosphatase activity and translocates PPP5C to the cell membrane. Interacts with RGS22. Interacts (via N-terminus) with NAPA; the interaction promotes CDH5 localization to plasma membrane. Interacts with CTNND1 (via N-terminus); the interaction regulates CDH1-mediated cell-cell adhesion. Interacts with PPP2R1A; the interaction promotes protein phosphatase 2A activation causing dephosphorylation of MAPT. Interacts (in GTP-bound form) with ARHGEF1. Interacts (in GTP-bound form) with ARHGEF11 (via RGS domain). Interacts (in GTP-bound form) with ARHGEF12 (via RGS domain).

The protein resides in the cell membrane. It is found in the lateral cell membrane. It localises to the cytoplasm. Guanine nucleotide-binding proteins (G proteins) are involved as modulators or transducers in various transmembrane signaling systems. Activates effector molecule RhoA by binding and activating RhoGEFs (ARHGEF12/LARG). GNA12-dependent Rho signaling subsequently regulates transcription factor AP-1 (activating protein-1). GNA12-dependent Rho signaling also regulates protein phosphatese 2A activation causing dephosphorylation of its target proteins. Promotes tumor cell invasion and metastasis by activating RhoA/ROCK signaling pathway and up-regulating pro-inflammatory cytokine production. Inhibits CDH1-mediated cell adhesion in process independent from Rho activation. Together with NAPA promotes CDH5 localization to plasma membrane. May play a role in the control of cell migration through the TOR signaling cascade. The chain is Guanine nucleotide-binding protein subunit alpha-12 (Gna12) from Rattus norvegicus (Rat).